Consider the following 241-residue polypeptide: DNA repair protein RecO (241 aa).

It belongs to the RecO family.

In terms of biological role, involved in DNA repair and RecF pathway recombination. In Yersinia pseudotuberculosis serotype O:1b (strain IP 31758), this protein is DNA repair protein RecO.